Reading from the N-terminus, the 228-residue chain is Prolactin-2B1 (228 aa).

The first 31 residues, M1–S31, serve as a signal peptide directing secretion. 2 disulfides stabilise this stretch: C89–C194 and C203–C228. N-linked (GlcNAc...) asparagine glycosylation occurs at N173.

The protein belongs to the somatotropin/prolactin family. In terms of tissue distribution, expression restricted to the placenta in trophoblast cells within the labyrinth zone.

It is found in the secreted. The protein is Prolactin-2B1 (Prl2b1) of Rattus norvegicus (Rat).